Consider the following 154-residue polypeptide: MKHVLASTAAGLMALGLASSAIAAGLSPEEQIETRQAGYEFMGWNMGKIKANLEGEYNAAQVEAAANVIAAIANSGMGALYGPGTDKNVGDVKTRVKPEFFQNMEDVGKIAREFVGAANTLAEVAATGEAEAVKTAFGDVGAACKSCHEKYRAK.

The first 23 residues, 1–23, serve as a signal peptide directing secretion; it reads MKHVLASTAAGLMALGLASSAIA. The heme c site is built by Arg35, Gln36, Arg95, Cys144, Cys147, and His148.

Homodimer. Binds 1 heme c group covalently per subunit.

Functionally, cytochrome c' is the most widely occurring bacterial c-type cytochrome. Cytochromes c' are high-spin proteins and the heme has no sixth ligand. Their exact function is not known. This Allochromatium vinosum (strain ATCC 17899 / DSM 180 / NBRC 103801 / NCIMB 10441 / D) (Chromatium vinosum) protein is Cytochrome c' (cycA).